The following is a 91-amino-acid chain: Large ribosomal subunit protein eL37B (91 aa).

The Zn(2+) site is built by C19, C22, C34, and C37. Residues 19 to 37 form a C4-type zinc finger; that stretch reads CRRCGKRSFHIQKSTCACC.

Belongs to the eukaryotic ribosomal protein eL37 family. Component of the large ribosomal subunit (LSU). Mature yeast ribosomes consist of a small (40S) and a large (60S) subunit. The 40S small subunit contains 1 molecule of ribosomal RNA (18S rRNA) and at least 33 different proteins. The large 60S subunit contains 3 rRNA molecules (25S, 5.8S and 5S rRNA) and at least 46 different proteins. Zn(2+) serves as cofactor.

It localises to the cytoplasm. Component of the ribosome, a large ribonucleoprotein complex responsible for the synthesis of proteins in the cell. The small ribosomal subunit (SSU) binds messenger RNAs (mRNAs) and translates the encoded message by selecting cognate aminoacyl-transfer RNA (tRNA) molecules. The large subunit (LSU) contains the ribosomal catalytic site termed the peptidyl transferase center (PTC), which catalyzes the formation of peptide bonds, thereby polymerizing the amino acids delivered by tRNAs into a polypeptide chain. The nascent polypeptides leave the ribosome through a tunnel in the LSU and interact with protein factors that function in enzymatic processing, targeting, and the membrane insertion of nascent chains at the exit of the ribosomal tunnel. This Schizosaccharomyces pombe (strain 972 / ATCC 24843) (Fission yeast) protein is Large ribosomal subunit protein eL37B (rpl3702).